Reading from the N-terminus, the 85-residue chain is Probable oxaloacetate decarboxylase gamma chain (85 aa).

Residues Ile15–Ile35 traverse the membrane as a helical segment.

The protein belongs to the OadG family. As to quaternary structure, heterotrimer of an alpha, a beta and a gamma subunit. The cofactor is Na(+).

The protein resides in the cell membrane. The enzyme catalyses oxaloacetate + 2 Na(+)(in) + H(+) = pyruvate + 2 Na(+)(out) + CO2. Its function is as follows. Catalyzes the decarboxylation of oxaloacetate coupled to Na(+) translocation. In Actinobacillus pleuropneumoniae serotype 5b (strain L20), this protein is Probable oxaloacetate decarboxylase gamma chain.